We begin with the raw amino-acid sequence, 314 residues long: tRNA dimethylallyltransferase (314 aa).

Residue 13 to 20 participates in ATP binding; the sequence is GPTAIGKT. 15 to 20 contacts substrate; that stretch reads TAIGKT. Residues 38-41 form an interaction with substrate tRNA region; it reads DSMQ.

This sequence belongs to the IPP transferase family. As to quaternary structure, monomer. It depends on Mg(2+) as a cofactor.

The enzyme catalyses adenosine(37) in tRNA + dimethylallyl diphosphate = N(6)-dimethylallyladenosine(37) in tRNA + diphosphate. Functionally, catalyzes the transfer of a dimethylallyl group onto the adenine at position 37 in tRNAs that read codons beginning with uridine, leading to the formation of N6-(dimethylallyl)adenosine (i(6)A). The sequence is that of tRNA dimethylallyltransferase from Desulfotalea psychrophila (strain LSv54 / DSM 12343).